The following is a 450-amino-acid chain: Keratin, type I cytoskeletal 25 (450 aa).

The tract at residues methionine 1–serine 24 is disordered. Residues methionine 1–asparagine 78 form a head region. Residues glutamate 79–tryptophan 114 are coil 1A. The IF rod domain maps to glutamate 79–cysteine 394. Residues tyrosine 115–isoleucine 136 form a linker 1 region. The segment at isoleucine 137 to leucine 228 is coil 1B. The linker 12 stretch occupies residues glutamine 229 to leucine 251. The segment at leucine 252 to aspartate 390 is coil 2. Residues aspartate 391–asparagine 450 are tail. Serine 442 is modified (phosphoserine).

Belongs to the intermediate filament family. As to quaternary structure, heterodimer of a type I and a type II keratin. Heterodimer with type II keratin KRT5 leading to the formation of keratin intermediate filament (KIF) network. Interacts with KRT6A to form filaments.

It is found in the cytoplasm. In terms of biological role, essential for the proper assembly of type I and type II keratin protein complexes and formation of keratin intermediate filaments in the inner root sheath (irs). Plays a role in the cytoskeleton organization. The chain is Keratin, type I cytoskeletal 25 from Capra hircus (Goat).